A 436-amino-acid polypeptide reads, in one-letter code: UPF0597 protein YhaM (436 aa).

The protein belongs to the UPF0597 family.

This is UPF0597 protein YhaM from Escherichia coli (strain SE11).